An 88-amino-acid polypeptide reads, in one-letter code: Small ribosomal subunit protein uS19 (88 aa).

The protein belongs to the universal ribosomal protein uS19 family.

Functionally, protein S19 forms a complex with S13 that binds strongly to the 16S ribosomal RNA. The protein is Small ribosomal subunit protein uS19 of Ureaplasma parvum serovar 3 (strain ATCC 27815 / 27 / NCTC 11736).